A 397-amino-acid chain; its full sequence is Acetate kinase (397 aa).

Asparagine 7 lines the Mg(2+) pocket. ATP is bound at residue lysine 14. Position 90 (arginine 90) interacts with substrate. The active-site Proton donor/acceptor is the aspartate 147. ATP contacts are provided by residues 207–211 (HLGNG), 282–284 (DFR), and 330–334 (GLGEN). Glutamate 383 serves as a coordination point for Mg(2+).

The protein belongs to the acetokinase family. Homodimer. It depends on Mg(2+) as a cofactor. Requires Mn(2+) as cofactor.

It localises to the cytoplasm. The enzyme catalyses acetate + ATP = acetyl phosphate + ADP. The protein operates within metabolic intermediate biosynthesis; acetyl-CoA biosynthesis; acetyl-CoA from acetate: step 1/2. Catalyzes the formation of acetyl phosphate from acetate and ATP. Can also catalyze the reverse reaction. This chain is Acetate kinase, found in Clostridium botulinum (strain Kyoto / Type A2).